The following is a 539-amino-acid chain: Neutral amino acid transporter B(0) (539 aa).

An N-acetylmethionine modification is found at M1. Residues 1 to 52 (MVADPPKGDPKGYAAAEPTANGVSMLVPIEDVGSLKGGRCGSGDQVRRCLRA) are Cytoplasmic-facing. A helical membrane pass occupies residues 53–82 (NLLVLLTVVAVVAGVALGLGVSGAGGAFAL). Topologically, residues 83 to 95 (GPARLEAFSFPGE) are extracellular. A helical transmembrane segment spans residues 96-117 (LLLRLLKMIILPLVVCSLIGGA). At 118-131 (ASLDPSALGRLGAW) the chain is on the cytoplasmic side. The helical transmembrane segment at 132-154 (ALLFFLVTTLLASALGVGLALAL) threads the bilayer. Over 155-223 (QPGAAFAAIN…GTLVKVPTGG (69 aa)) the chain is Extracellular. 2 N-linked (GlcNAc...) asparagine glycosylation sites follow: N164 and N213. A helical transmembrane segment spans residues 224–247 (EVEGMNILGLVVFAIIFGVALRKL). Topologically, residues 248 to 256 (GPEGELLIR) are cytoplasmic. The chain crosses the membrane as a helical span at residues 257–284 (FFNSFNDATMVLVSWIMWYAPVGILFLV). The Extracellular segment spans residues 285-305 (AGKIVEMENVGLLFASLGKYI). A helical transmembrane segment spans residues 306 to 327 (LCCLLGHAIHGLLTLPLIYFLF). Over 328–332 (ARKNP) the chain is Cytoplasmic. The discontinuously helical intramembrane region spans 333 to 363 (YRFLWGIMTPLATAFGTSSSSATLPLMMKCV). At 364-372 (EEKNGVARH) the chain is on the cytoplasmic side. A helical transmembrane segment spans residues 373–399 (ISRFILPIGATVNMDGAALFQCVAAVF). The Na(+) site is built by G381, T383, and N385. Over 400-412 (IAQLNHRSLDFVK) the chain is Extracellular. Positions 413–446 (IITILVTATASSVGAAGIPSGGVLTLAIILEAVN) form an intramembrane region, discontinuously helical. The Extracellular portion of the chain corresponds to 447–459 (LPVHDISLILAVD). A helical membrane pass occupies residues 460–481 (WLVDRSCTVLNVEGDAFGAGLL). N470 and D474 together coordinate Na(+). At 482-539 (QSYLDRTENCNSVPELIQVKSEMPLAALPVPGEEGNPLLKGCPGPAGDADTCEKESVM) the chain is on the cytoplasmic side. Residues S493, S502, and S537 each carry the phosphoserine modification. A disordered region spans residues 518–539 (PLLKGCPGPAGDADTCEKESVM).

It belongs to the dicarboxylate/amino acid:cation symporter (DAACS) (TC 2.A.23) family. SLC1A5 subfamily. Homotrimer.

It is found in the cell membrane. Its subcellular location is the melanosome. It catalyses the reaction L-glutamine(out) + L-serine(in) + Na(+)(out) = L-glutamine(in) + L-serine(out) + Na(+)(in). It carries out the reaction L-glutamine(in) + L-serine(out) + Na(+)(out) = L-glutamine(out) + L-serine(in) + Na(+)(in). The catalysed reaction is L-threonine(in) + L-glutamine(out) + Na(+)(out) = L-threonine(out) + L-glutamine(in) + Na(+)(in). The enzyme catalyses L-threonine(out) + L-glutamine(in) + Na(+)(out) = L-threonine(in) + L-glutamine(out) + Na(+)(in). It catalyses the reaction L-asparagine(in) + L-glutamine(out) + Na(+)(out) = L-asparagine(out) + L-glutamine(in) + Na(+)(in). It carries out the reaction L-asparagine(out) + L-glutamine(in) + Na(+)(out) = L-asparagine(in) + L-glutamine(out) + Na(+)(in). The catalysed reaction is L-glutamine(in) + L-alanine(out) + Na(+)(out) = L-glutamine(out) + L-alanine(in) + Na(+)(in). The enzyme catalyses L-valine(out) + L-glutamine(in) + Na(+)(out) = L-valine(in) + L-glutamine(out) + Na(+)(in). It catalyses the reaction L-glutamine(in) + L-methionine(out) + Na(+)(out) = L-glutamine(out) + L-methionine(in) + Na(+)(in). It carries out the reaction L-glutamine(in) + L-glutamate(out) + Na(+)(out) + H(+)(out) = L-glutamine(out) + L-glutamate(in) + Na(+)(in) + H(+)(in). The catalysed reaction is D-serine(in) + L-glutamine(out) + Na(+)(out) = D-serine(out) + L-glutamine(in) + Na(+)(in). The enzyme catalyses D-serine(in) + L-alanine(out) + Na(+)(out) = D-serine(out) + L-alanine(in) + Na(+)(in). It catalyses the reaction nitrate(in) = nitrate(out). It carries out the reaction iodide(out) = iodide(in). The catalysed reaction is thiocyanate(in) = thiocyanate(out). Functionally, sodium-coupled antiporter of neutral amino acids. In a tri-substrate transport cycle, exchanges neutral amino acids between the extracellular and intracellular compartments, coupled to the inward cotransport of at least one sodium ion. The preferred substrate is the essential amino acid L-glutamine, a precursor for biosynthesis of proteins, nucleotides and amine sugars as well as an alternative fuel for mitochondrial oxidative phosphorylation. Exchanges L-glutamine with other neutral amino acids such as L-serine, L-threonine and L-asparagine in a bidirectional way. Provides L-glutamine to proliferating stem and activated cells driving the metabolic switch toward cell differentiation. The transport cycle is usually pH-independent, with the exception of L-glutamate. Transports extracellular L-glutamate coupled to the cotransport of one proton and one sodium ion in exchange for intracellular L-glutamine counter-ion. May provide for L-glutamate uptake in glial cells regulating glutamine/glutamate cycle in the nervous system. Can transport D-amino acids. Mediates D-serine release from the retinal glia potentially affecting NMDA receptor function in retinal neurons. Displays sodium- and amino acid-dependent but uncoupled channel-like anion conductance with a preference SCN(-) &gt;&gt; NO3(-) &gt; I(-) &gt; Cl(-). Through binding of the fusogenic protein syncytin-1/ERVW-1 may mediate trophoblasts syncytialization, the spontaneous fusion of their plasma membranes, an essential process in placental development. The sequence is that of Neutral amino acid transporter B(0) (SLC1A5) from Bos taurus (Bovine).